A 346-amino-acid polypeptide reads, in one-letter code: Ketol-acid reductoisomerase (NADP(+)) (346 aa).

The 189-residue stretch at 1 to 189 (MQVYYDRDAD…GGGRSGIIET (189 aa)) folds into the KARI N-terminal Rossmann domain. NADP(+)-binding positions include 24–27 (YGSQ), Arg48, Ser51, Thr53, and 83–86 (DEHQ). His108 is an active-site residue. Gly134 provides a ligand contact to NADP(+). Residues 190-335 (TFKEECETDL…EKLRAMMPWI (146 aa)) enclose the KARI C-terminal knotted domain. Residues Asp198, Glu202, Glu234, and Glu238 each contribute to the Mg(2+) site. Ser259 is a substrate binding site.

The protein belongs to the ketol-acid reductoisomerase family. The cofactor is Mg(2+).

It carries out the reaction (2R)-2,3-dihydroxy-3-methylbutanoate + NADP(+) = (2S)-2-acetolactate + NADPH + H(+). The catalysed reaction is (2R,3R)-2,3-dihydroxy-3-methylpentanoate + NADP(+) = (S)-2-ethyl-2-hydroxy-3-oxobutanoate + NADPH + H(+). It participates in amino-acid biosynthesis; L-isoleucine biosynthesis; L-isoleucine from 2-oxobutanoate: step 2/4. Its pathway is amino-acid biosynthesis; L-valine biosynthesis; L-valine from pyruvate: step 2/4. In terms of biological role, involved in the biosynthesis of branched-chain amino acids (BCAA). Catalyzes an alkyl-migration followed by a ketol-acid reduction of (S)-2-acetolactate (S2AL) to yield (R)-2,3-dihydroxy-isovalerate. In the isomerase reaction, S2AL is rearranged via a Mg-dependent methyl migration to produce 3-hydroxy-3-methyl-2-ketobutyrate (HMKB). In the reductase reaction, this 2-ketoacid undergoes a metal-dependent reduction by NADPH to yield (R)-2,3-dihydroxy-isovalerate. The chain is Ketol-acid reductoisomerase (NADP(+)) from Sphingopyxis alaskensis (strain DSM 13593 / LMG 18877 / RB2256) (Sphingomonas alaskensis).